A 269-amino-acid polypeptide reads, in one-letter code: Flagellar hook-basal body complex protein FlhP (269 aa).

A coiled-coil region spans residues Thr-7–Thr-65.

Belongs to the flagella basal body rod proteins family.

The chain is Flagellar hook-basal body complex protein FlhP (flhP) from Bacillus subtilis (strain 168).